A 500-amino-acid polypeptide reads, in one-letter code: MNKFPWLTIIVVLPIFAGSLIFFLPHKGNRVIRWYTICICMLELLLTTYAFCYHFQLDDPLIQLVEDYKWINFFDFRWKLGIDGLSLGPVLLTGFITTLATLAAWPVTRDSRLFHFLMLAMYSGQIGSFSSRDLLLFFIMWELELIPVYLLLSMWGGKKRLYSATKFILYTAGGSIFLLMGVLGVGLYGSNEPTLNFETSVNQSYPVALEIIFYIGFLIAFAVKLPILPLHTWLPDTHGEAHYSTCMLLAGILLKMGAYGLIRINMELLPHAHSIFSPWLMVVGTIQIIYAASTSLGQRNLKKRIAYSSVSHMGFILIGIASITDTGLNGAILQIISHGFIGAALFFLAGTSYDRIRLVYLDEMGGVAIPMPKIFTMFSSFSMASLALPGMSGFVAEVLVFLGIITSQKYLLMPKIAITFVMAIGMILTPIYLLSMSRQIFYGYKLFNTPNSYVFDSGPRELFVSISIFIPVIGIGMYPDFVLSLSVDKVEGILSNYFYR.

Helical transmembrane passes span 4 to 24, 35 to 55, 87 to 107, 113 to 130, 134 to 154, 167 to 187, 207 to 227, 242 to 262, 272 to 292, 305 to 325, 330 to 350, 386 to 406, 416 to 436, and 462 to 482; these read FPWLTIIVVLPIFAGSLIFFL, YTICICMLELLLTTYAFCYHF, LGPVLLTGFITTLATLAAWPV, LFHFLMLAMYSGQIGSFS, LLLFFIMWELELIPVYLLLSM, FILYTAGGSIFLLMGVLGVGL, VALEIIFYIGFLIAFAVKLPI, HYSTCMLLAGILLKMGAYGLI, AHSIFSPWLMVVGTIQIIYAA, IAYSSVSHMGFILIGIASITD, GAILQIISHGFIGAALFFLAG, LALPGMSGFVAEVLVFLGIIT, IAITFVMAIGMILTPIYLLSM, and LFVSISIFIPVIGIGMYPDFV.

Belongs to the complex I subunit 4 family.

The protein localises to the plastid. It localises to the chloroplast thylakoid membrane. It carries out the reaction a plastoquinone + NADH + (n+1) H(+)(in) = a plastoquinol + NAD(+) + n H(+)(out). The enzyme catalyses a plastoquinone + NADPH + (n+1) H(+)(in) = a plastoquinol + NADP(+) + n H(+)(out). The protein is NAD(P)H-quinone oxidoreductase chain 4, chloroplastic of Helianthus annuus (Common sunflower).